The primary structure comprises 388 residues: Xylose isomerase (388 aa).

Residues H54 and D57 contribute to the active site. Residues E181, E217, H220, D245, D255, D257, and D287 each contribute to the Mg(2+) site.

Belongs to the xylose isomerase family. Homotetramer. The cofactor is Mg(2+).

It is found in the cytoplasm. The catalysed reaction is alpha-D-xylose = alpha-D-xylulofuranose. Involved in D-xylose catabolism. The polypeptide is Xylose isomerase (xylA) (Streptomyces murinus).